We begin with the raw amino-acid sequence, 109 residues long: Flowering-promoting factor 1-like protein 1 (109 aa).

Positions 73 to 81 (RGSLDLISL) match the D-box motif.

The protein belongs to the FPF1 family. Interacts with RPT4. Post-translationally, ubiquitinated. RPT4 mediates its proteasome-dependent degradation. Specifically expressed in the apical meristem, the elongation zone of root tip, steles of the branch zone, and the young lateral root. Also expressed in spikes. Expressed in roots and spikes (at protein level).

It is found in the cytoplasm. The protein resides in the nucleus. In terms of biological role, GTP-binding protein that functions in the development of root systems, which are mediated by auxin. Acts as a cell cycle regulator during root development. Proteasome-mediated degradation of the protein is necessary for the transition of metaphase to anaphase in mitosis. The polypeptide is Flowering-promoting factor 1-like protein 1 (RAA1) (Oryza sativa subsp. japonica (Rice)).